Here is a 162-residue protein sequence, read N- to C-terminus: Flagellar assembly factor FliW (162 aa).

Belongs to the FliW family. Interacts with translational regulator CsrA and flagellin(s).

The protein resides in the cytoplasm. Its function is as follows. Acts as an anti-CsrA protein, binds CsrA and prevents it from repressing translation of its target genes, one of which is flagellin. Binds to flagellin and participates in the assembly of the flagellum. This Magnetococcus marinus (strain ATCC BAA-1437 / JCM 17883 / MC-1) protein is Flagellar assembly factor FliW.